The following is a 626-amino-acid chain: UvrABC system protein C (626 aa).

In terms of domain architecture, GIY-YIG spans 26–105; that stretch reads QEPGVYFMGD…IKQHQPHFNV (80 aa). The region spanning 215-250 is the UVR domain; it reads QELHQLLTQQMEKAAADLKFEQAALIRDQINSLGKL.

Belongs to the UvrC family. Interacts with UvrB in an incision complex.

The protein resides in the cytoplasm. In terms of biological role, the UvrABC repair system catalyzes the recognition and processing of DNA lesions. UvrC both incises the 5' and 3' sides of the lesion. The N-terminal half is responsible for the 3' incision and the C-terminal half is responsible for the 5' incision. The protein is UvrABC system protein C of Synechocystis sp. (strain ATCC 27184 / PCC 6803 / Kazusa).